The chain runs to 503 residues: MFLEMLNPMQYNVTIMVPETVTVSAMPLLLIMGLLLLIWNCESSSSIPGPGYCLGIGPLISHGRFLWMGIGSACNYYNKMYGEFMRVWISGEETLIISKSSSMFHVMKHSHYISRFGSKRGLQCIGMHENGIIFNNNPSLWRTIRPFFMKALTGPGLVRMVEVCVESIKQHLDRLGEVTDTSGYVDVLTLMRHIMLDTSNMLFLGIPLDESAIVKKIQGYFNAWQALLIKPNIFFKISWLYRKYERSVKDLKDEIAVLVEKKRHKVSTAEKLEDCMDFATDLIFAERRGDLTKENVNQCILEMLIAAPDTMSVTLYFMLLLVAEYPEVEAAILKEIHTVVGDRDIKIEDIQNLKVVENFINESMRYQPVVDLVMRRALEDDVIDGYPVKKGTNIILNIGRMHRLEYFPKPNEFTLENFEKNVPYRYFQPFGFGPRGCAGKYIAMVMMKVVLVTLLRRFQVKTLQKRCIENIPKKNDLSLHPNEDRHLVEIIFSPRNSDKYLQQ.

A helical transmembrane segment spans residues 21–41; that stretch reads VTVSAMPLLLIMGLLLLIWNC. Substrate is bound by residues Asp-309 and Met-374. Cys-437 is a heme binding site.

This sequence belongs to the cytochrome P450 family. Heme serves as cofactor.

It localises to the endoplasmic reticulum membrane. It is found in the microsome membrane. It catalyses the reaction testosterone + 3 reduced [NADPH--hemoprotein reductase] + 3 O2 = 17beta-estradiol + formate + 3 oxidized [NADPH--hemoprotein reductase] + 4 H2O + 4 H(+). It carries out the reaction androst-4-ene-3,17-dione + 3 reduced [NADPH--hemoprotein reductase] + 3 O2 = estrone + formate + 3 oxidized [NADPH--hemoprotein reductase] + 4 H2O + 4 H(+). The enzyme catalyses androst-4-ene-3,17-dione + reduced [NADPH--hemoprotein reductase] + O2 = 19-hydroxyandrost-4-ene-3,17-dione + oxidized [NADPH--hemoprotein reductase] + H2O + H(+). The catalysed reaction is 19-hydroxyandrost-4-ene-3,17-dione + reduced [NADPH--hemoprotein reductase] + O2 = 19-oxo-androst-4-ene-3,17-dione + oxidized [NADPH--hemoprotein reductase] + 2 H2O + H(+). It catalyses the reaction 19-oxo-androst-4-ene-3,17-dione + reduced [NADPH--hemoprotein reductase] + O2 = estrone + formate + oxidized [NADPH--hemoprotein reductase] + H2O + 2 H(+). It carries out the reaction estrone + reduced [NADPH--hemoprotein reductase] + O2 = 2-hydroxyestrone + oxidized [NADPH--hemoprotein reductase] + H2O + H(+). The enzyme catalyses 17beta-hydroxy-5alpha-androstan-3-one + reduced [NADPH--hemoprotein reductase] + O2 = 17beta,19-dihydroxy-3-oxo-5alpha-androstanone + oxidized [NADPH--hemoprotein reductase] + H2O + H(+). The catalysed reaction is 17beta,19-dihydroxy-3-oxo-5alpha-androstanone + reduced [NADPH--hemoprotein reductase] + O2 = 17beta-hydroxy-3,19-dioxo-5alpha-androstanone + oxidized [NADPH--hemoprotein reductase] + 2 H2O + H(+). It catalyses the reaction 17beta-hydroxy-3,19-dioxo-5alpha-androstanone + reduced [NADPH--hemoprotein reductase] + O2 = 17beta-hydroxy-3-oxo-19-nor-5alpha-androst-1-ene + formate + oxidized [NADPH--hemoprotein reductase] + H2O + 2 H(+). The protein operates within steroid hormone biosynthesis. Functionally, a cytochrome P450 monooxygenase that catalyzes the conversion of C19 androgens, androst-4-ene-3,17-dione (androstenedione) and testosterone to the C18 estrogens, estrone and estradiol, respectively. Catalyzes three successive oxidations of C19 androgens: two conventional oxidations at C19 yielding 19-hydroxy and 19-oxo/19-aldehyde derivatives, followed by a third oxidative aromatization step that involves C1-beta hydrogen abstraction combined with cleavage of the C10-C19 bond to yield a phenolic A ring and formic acid. Alternatively, the third oxidative reaction yields a 19-norsteroid and formic acid. Converts dihydrotestosterone to delta1,10-dehydro 19-nordihydrotestosterone and may play a role in homeostasis of this potent androgen. Also displays 2-hydroxylase activity toward estrone. Mechanistically, uses molecular oxygen inserting one oxygen atom into a substrate, and reducing the second into a water molecule, with two electrons provided by NADPH via cytochrome P450 reductase (CPR; NADPH-ferrihemoprotein reductase). The protein is Aromatase (Cyp19a1) of Mus musculus (Mouse).